Here is a 319-residue protein sequence, read N- to C-terminus: Thymidylate synthase (319 aa).

DUMP-binding positions include R25 and 181 to 182 (RR). The active-site Nucleophile is the C201. DUMP is bound by residues 221 to 224 (RSAD), N232, and 262 to 264 (HIY). Residue D224 participates in (6R)-5,10-methylene-5,6,7,8-tetrahydrofolate binding. (6R)-5,10-methylene-5,6,7,8-tetrahydrofolate is bound at residue A318.

It belongs to the thymidylate synthase family. Bacterial-type ThyA subfamily. Homodimer.

Its subcellular location is the cytoplasm. The enzyme catalyses dUMP + (6R)-5,10-methylene-5,6,7,8-tetrahydrofolate = 7,8-dihydrofolate + dTMP. The protein operates within pyrimidine metabolism; dTTP biosynthesis. Catalyzes the reductive methylation of 2'-deoxyuridine-5'-monophosphate (dUMP) to 2'-deoxythymidine-5'-monophosphate (dTMP) while utilizing 5,10-methylenetetrahydrofolate (mTHF) as the methyl donor and reductant in the reaction, yielding dihydrofolate (DHF) as a by-product. This enzymatic reaction provides an intracellular de novo source of dTMP, an essential precursor for DNA biosynthesis. The sequence is that of Thymidylate synthase from Oenococcus oeni (strain ATCC BAA-331 / PSU-1).